The sequence spans 199 residues: FMN-dependent NADH:quinone oxidoreductase 2 (199 aa).

Residues Ser-10, 16 to 18 (SVS), and 96 to 99 (MYNF) contribute to the FMN site.

This sequence belongs to the azoreductase type 1 family. In terms of assembly, homodimer. The cofactor is FMN.

The enzyme catalyses 2 a quinone + NADH + H(+) = 2 a 1,4-benzosemiquinone + NAD(+). The catalysed reaction is N,N-dimethyl-1,4-phenylenediamine + anthranilate + 2 NAD(+) = 2-(4-dimethylaminophenyl)diazenylbenzoate + 2 NADH + 2 H(+). In terms of biological role, quinone reductase that provides resistance to thiol-specific stress caused by electrophilic quinones. Its function is as follows. Also exhibits azoreductase activity. Catalyzes the reductive cleavage of the azo bond in aromatic azo compounds to the corresponding amines. The chain is FMN-dependent NADH:quinone oxidoreductase 2 from Pseudomonas putida (strain ATCC 47054 / DSM 6125 / CFBP 8728 / NCIMB 11950 / KT2440).